A 364-amino-acid chain; its full sequence is UDP-N-acetylglucosamine--N-acetylmuramyl-(pentapeptide) pyrophosphoryl-undecaprenol N-acetylglucosamine transferase (364 aa).

UDP-N-acetyl-alpha-D-glucosamine is bound by residues 10–12 (TGG), N124, S195, and Q295.

The protein belongs to the glycosyltransferase 28 family. MurG subfamily.

The protein resides in the cell membrane. It carries out the reaction di-trans,octa-cis-undecaprenyl diphospho-N-acetyl-alpha-D-muramoyl-L-alanyl-D-glutamyl-meso-2,6-diaminopimeloyl-D-alanyl-D-alanine + UDP-N-acetyl-alpha-D-glucosamine = di-trans,octa-cis-undecaprenyl diphospho-[N-acetyl-alpha-D-glucosaminyl-(1-&gt;4)]-N-acetyl-alpha-D-muramoyl-L-alanyl-D-glutamyl-meso-2,6-diaminopimeloyl-D-alanyl-D-alanine + UDP + H(+). Its pathway is cell wall biogenesis; peptidoglycan biosynthesis. In terms of biological role, cell wall formation. Catalyzes the transfer of a GlcNAc subunit on undecaprenyl-pyrophosphoryl-MurNAc-pentapeptide (lipid intermediate I) to form undecaprenyl-pyrophosphoryl-MurNAc-(pentapeptide)GlcNAc (lipid intermediate II). The chain is UDP-N-acetylglucosamine--N-acetylmuramyl-(pentapeptide) pyrophosphoryl-undecaprenol N-acetylglucosamine transferase from Bacillus pumilus (strain SAFR-032).